The following is a 349-amino-acid chain: Peroxidase 22 (349 aa).

Residues 1 to 29 (MGFSPSFSCSAIGALILGCLLLQASNSNA) form the signal peptide. At Gln30 the chain carries Pyrrolidone carboxylic acid. Cystine bridges form between Cys40-Cys120, Cys73-Cys78, Cys126-Cys329, and Cys206-Cys238. His71 serves as the catalytic Proton acceptor. Ca(2+)-binding residues include Asp72, Val75, Gly77, Asp79, and Ser81. Asn86 carries an N-linked (GlcNAc...) asparagine glycan. Substrate is bound at residue Pro168. N-linked (GlcNAc...) asparagine glycans are attached at residues Asn173 and Asn187. His199 lines the heme b pocket. Residue Thr200 participates in Ca(2+) binding. N-linked (GlcNAc...) asparagine glycosylation is found at Asn217 and Asn243. The Ca(2+) site is built by Asp251, Thr254, and Asp259.

It belongs to the peroxidase family. Classical plant (class III) peroxidase subfamily. Heme b is required as a cofactor. The cofactor is Ca(2+). As to expression, mainly expressed in roots.

It localises to the secreted. The protein resides in the vacuole. The catalysed reaction is 2 a phenolic donor + H2O2 = 2 a phenolic radical donor + 2 H2O. Functionally, removal of H(2)O(2), oxidation of toxic reductants, biosynthesis and degradation of lignin, suberization, auxin catabolism, response to environmental stresses such as wounding, pathogen attack and oxidative stress. These functions might be dependent on each isozyme/isoform in each plant tissue. The polypeptide is Peroxidase 22 (PER22) (Arabidopsis thaliana (Mouse-ear cress)).